The chain runs to 357 residues: UDP-N-acetylglucosamine--N-acetylmuramyl-(pentapeptide) pyrophosphoryl-undecaprenol N-acetylglucosamine transferase (357 aa).

UDP-N-acetyl-alpha-D-glucosamine-binding positions include 10-12, Asn124, Ser189, Ile244, and Gln289; that span reads TGG.

This sequence belongs to the glycosyltransferase 28 family. MurG subfamily.

It localises to the cell membrane. It catalyses the reaction Mur2Ac(oyl-L-Ala-gamma-D-Glu-L-Lys-D-Ala-D-Ala)-di-trans,octa-cis-undecaprenyl diphosphate + UDP-N-acetyl-alpha-D-glucosamine = beta-D-GlcNAc-(1-&gt;4)-Mur2Ac(oyl-L-Ala-gamma-D-Glu-L-Lys-D-Ala-D-Ala)-di-trans,octa-cis-undecaprenyl diphosphate + UDP + H(+). Its pathway is cell wall biogenesis; peptidoglycan biosynthesis. Functionally, cell wall formation. Catalyzes the transfer of a GlcNAc subunit on undecaprenyl-pyrophosphoryl-MurNAc-pentapeptide (lipid intermediate I) to form undecaprenyl-pyrophosphoryl-MurNAc-(pentapeptide)GlcNAc (lipid intermediate II). This is UDP-N-acetylglucosamine--N-acetylmuramyl-(pentapeptide) pyrophosphoryl-undecaprenol N-acetylglucosamine transferase from Lactococcus lactis subsp. cremoris (strain MG1363).